The chain runs to 78 residues: Alpha-neurotoxin homolog 1 (78 aa).

Positions 1-21 are cleaved as a signal peptide; sequence MKTLLLTLVVVTIVCLDFGYT. 4 disulfide bridges follow: Cys24/Cys42, Cys37/Cys57, Cys59/Cys70, and Cys71/Cys76.

It belongs to the three-finger toxin family. Short-chain subfamily. Orphan group XII sub-subfamily. Expressed by the venom gland.

It is found in the secreted. This is Alpha-neurotoxin homolog 1 from Micrurus corallinus (Brazilian coral snake).